We begin with the raw amino-acid sequence, 20 residues long: Tetracycline resistance leader peptide (20 aa).

Residues 1-20 (MKCNKMNRVQLKEGSVSMTL) are disordered.

The sequence is that of Tetracycline resistance leader peptide (tetL) from Bacillus subtilis (strain 168).